Consider the following 745-residue polypeptide: Single-minded homolog 1-A (745 aa).

A bHLH domain is found at 1-53 (MKEKSKNAGRTRREKENSEFYELAKLLPLPSAITSQSDKASIIRLTTSYLKMR). PAS domains are found at residues 77–147 (GREL…QPYH) and 218–288 (PPSA…LVKG). Residues 336-745 (EYKGLQLSLD…GTSVIITNGS (410 aa)) enclose the Single-minded C-terminal domain. A compositionally biased stretch (polar residues) spans 350–364 (TKPSFTYNSPSNPVT). 2 disordered regions span residues 350–413 (TKPS…LTDS) and 529–563 (EDSAVSSAPDGGSASDSGDRFRADQCRSSPQEPSK). The short motif at 368 to 387 (RVGKSRVSRTKTKTRLSPYS) is the Nuclear localization signal element. Residues 369-381 (VGKSRVSRTKTKT) show a composition bias toward basic residues. Residues 532–544 (AVSSAPDGGSASD) are compositionally biased toward low complexity.

Efficient DNA binding requires dimerization with another bHLH protein. Heterodimer of sim1a and arnt. As to expression, expressed in embryonic forebrain at the eleven somite stage. Detected in brain throughout embryonic development.

The protein localises to the nucleus. Its function is as follows. Transcriptional factor that may have pleiotropic effects during embryogenesis and in the adult. The polypeptide is Single-minded homolog 1-A (sim1a) (Danio rerio (Zebrafish)).